The primary structure comprises 57 residues: uncharacterized protein (57 aa).

Residues 1–57 (MPHYVVVKSPMRRRRSPRRRSPRVCYSPRRVACSPRRRSPRRRSPRRRSPRRSIVVY) are disordered. Over residues 10–22 (PMRRRRSPRRRSP) the composition is skewed to basic residues. The segment covering 23–34 (RVCYSPRRVACS) has biased composition (low complexity). Over residues 35-51 (PRRRSPRRRSPRRRSPR) the composition is skewed to basic residues.

This is an uncharacterized protein from Acheta domesticus (House cricket).